We begin with the raw amino-acid sequence, 583 residues long: Protein translocase subunit SecD (583 aa).

The next 6 membrane-spanning stretches (helical) occupy residues 7–27 (FGVVLVVLAACSGFLFPTLQW), 419–439 (LVWGLCAVLLFMLVWYQEAGV), 446–468 (LLNLYIMFGVLSAFNLTLTLSSI), 469–489 (AGMILTIGMAVDANVVVFERI), 511–531 (FWAIMDSNVTTFIAALFLSVL), and 538–558 (GFAYSLAIGVVSSVFTALFVS).

Belongs to the SecD/SecF family. SecD subfamily. Forms a complex with SecF. Part of the essential Sec protein translocation apparatus which comprises SecA, SecYEG and auxiliary proteins SecDF. Other proteins may also be involved.

The protein localises to the cell inner membrane. Functionally, part of the Sec protein translocase complex. Interacts with the SecYEG preprotein conducting channel. SecDF uses the proton motive force (PMF) to complete protein translocation after the ATP-dependent function of SecA. The chain is Protein translocase subunit SecD from Treponema pallidum (strain Nichols).